Reading from the N-terminus, the 432-residue chain is MPDYVNWLRHASPYINAHRDCTFVVMLPGDGVEHPNFGNIVHDLVLLHSLGVRLVLVHGSRPQIESRLADRGLTPHYHRGMRITDAATLDCVIDAVGALRLAIEARLSMDIAASPMQGSRLRVASGNLVTARPIGVLEGVDYHHTGEVRRVDRKGISRLLDERSIVLLSPLGYSPTGEIFNLACEDVATRAAIELGADKLLLFGAEPGLLDADGKLVRELRPQQVAPHLQRLGSDYQGELLDAAAEACKGGVARSHIVSYAEDGALLTELFTRGGGGTLVSQEQFEVVREASIEDVGGLLELISPLEEQGILVRRSREVLEREIEQFSVVEREGMIIACAALYPIADSEAGELACLAVNPEYRHGGRGDELLERIESRARQMGLNTLFVLTTRTAHWFRERGFAPSGVERLPAARASLYNYQRNSKIFEKAL.

An N-acetyltransferase domain is found at 286–425 (EVVREASIED…ASLYNYQRNS (140 aa)).

The protein belongs to the acetyltransferase family. ArgA subfamily.

Its subcellular location is the cytoplasm. The catalysed reaction is L-glutamate + acetyl-CoA = N-acetyl-L-glutamate + CoA + H(+). It functions in the pathway amino-acid biosynthesis; L-arginine biosynthesis; N(2)-acetyl-L-ornithine from L-glutamate: step 1/4. This is Amino-acid acetyltransferase from Pseudomonas putida (strain GB-1).